The chain runs to 253 residues: Phosphate import ATP-binding protein PstB (253 aa).

The 242-residue stretch at 7–248 folds into the ABC transporter domain; sequence IEVEDLNVYF…PRDKRTEDYI (242 aa). 39–46 contacts ATP; it reads GPSGCGKS.

The protein belongs to the ABC transporter superfamily. Phosphate importer (TC 3.A.1.7) family. In terms of assembly, the complex is composed of two ATP-binding proteins (PstB), two transmembrane proteins (PstC and PstA) and a solute-binding protein (PstS).

It is found in the cell membrane. The enzyme catalyses phosphate(out) + ATP + H2O = ADP + 2 phosphate(in) + H(+). Its function is as follows. Part of the ABC transporter complex PstSACB involved in phosphate import. Responsible for energy coupling to the transport system. The polypeptide is Phosphate import ATP-binding protein PstB (Methanothermobacter thermautotrophicus (strain ATCC 29096 / DSM 1053 / JCM 10044 / NBRC 100330 / Delta H) (Methanobacterium thermoautotrophicum)).